The primary structure comprises 408 residues: NADH-quinone oxidoreductase subunit D (408 aa).

Belongs to the complex I 49 kDa subunit family. NDH-1 is composed of 14 different subunits. Subunits NuoB, C, D, E, F, and G constitute the peripheral sector of the complex.

The protein resides in the cell inner membrane. It catalyses the reaction a quinone + NADH + 5 H(+)(in) = a quinol + NAD(+) + 4 H(+)(out). Its function is as follows. NDH-1 shuttles electrons from NADH, via FMN and iron-sulfur (Fe-S) centers, to quinones in the respiratory chain. The immediate electron acceptor for the enzyme in this species is believed to be ubiquinone. Couples the redox reaction to proton translocation (for every two electrons transferred, four hydrogen ions are translocated across the cytoplasmic membrane), and thus conserves the redox energy in a proton gradient. The polypeptide is NADH-quinone oxidoreductase subunit D (Campylobacter jejuni subsp. jejuni serotype O:23/36 (strain 81-176)).